Here is a 446-residue protein sequence, read N- to C-terminus: Glutamate-1-semialdehyde 2,1-aminomutase (446 aa).

The residue at position 264 (lysine 264) is an N6-(pyridoxal phosphate)lysine.

The protein belongs to the class-III pyridoxal-phosphate-dependent aminotransferase family. HemL subfamily. Requires pyridoxal 5'-phosphate as cofactor.

The protein localises to the cytoplasm. It carries out the reaction (S)-4-amino-5-oxopentanoate = 5-aminolevulinate. It participates in porphyrin-containing compound metabolism; protoporphyrin-IX biosynthesis; 5-aminolevulinate from L-glutamyl-tRNA(Glu): step 2/2. The polypeptide is Glutamate-1-semialdehyde 2,1-aminomutase (Natronomonas pharaonis (strain ATCC 35678 / DSM 2160 / CIP 103997 / JCM 8858 / NBRC 14720 / NCIMB 2260 / Gabara) (Halobacterium pharaonis)).